The primary structure comprises 86 residues: Cytochrome c oxidase subunit 6B1 (86 aa).

N-acetylalanine is present on Ala2. Residues 27-73 enclose the CHCH domain; that stretch reads TRNCWQNYLDFHRCEKAMTAKGGDVSVCEWYRRVYKSLCPISWVSTW. The short motif at 30–40 is the Cx9C motif element; the sequence is CWQNYLDFHRC. Disulfide bonds link Cys30–Cys65 and Cys40–Cys54. Positions 54-65 match the Cx10C motif motif; sequence CEWYRRVYKSLC. Lys62 carries the post-translational modification N6-acetyllysine.

The protein belongs to the cytochrome c oxidase subunit 6B family. As to quaternary structure, component of the cytochrome c oxidase (complex IV, CIV), a multisubunit enzyme composed of 14 subunits. The complex is composed of a catalytic core of 3 subunits MT-CO1, MT-CO2 and MT-CO3, encoded in the mitochondrial DNA, and 11 supernumerary subunits COX4I1 (or COX4I2), COX5A, COX5B, COX6A2 (or COX6A1), COX6B1 (or COX6B2), COX6C, COX7A1 (or COX7A2), COX7B, COX7C, COX8B and NDUFA4, which are encoded in the nuclear genome. The complex exists as a monomer or a dimer and forms supercomplexes (SCs) in the inner mitochondrial membrane with NADH-ubiquinone oxidoreductase (complex I, CI) and ubiquinol-cytochrome c oxidoreductase (cytochrome b-c1 complex, complex III, CIII), resulting in different assemblies (supercomplex SCI(1)III(2)IV(1) and megacomplex MCI(2)III(2)IV(2)).

The protein localises to the mitochondrion inner membrane. Its pathway is energy metabolism; oxidative phosphorylation. In terms of biological role, component of the cytochrome c oxidase, the last enzyme in the mitochondrial electron transport chain which drives oxidative phosphorylation. The respiratory chain contains 3 multisubunit complexes succinate dehydrogenase (complex II, CII), ubiquinol-cytochrome c oxidoreductase (cytochrome b-c1 complex, complex III, CIII) and cytochrome c oxidase (complex IV, CIV), that cooperate to transfer electrons derived from NADH and succinate to molecular oxygen, creating an electrochemical gradient over the inner membrane that drives transmembrane transport and the ATP synthase. Cytochrome c oxidase is the component of the respiratory chain that catalyzes the reduction of oxygen to water. Electrons originating from reduced cytochrome c in the intermembrane space (IMS) are transferred via the dinuclear copper A center (CU(A)) of subunit 2 and heme A of subunit 1 to the active site in subunit 1, a binuclear center (BNC) formed by heme A3 and copper B (CU(B)). The BNC reduces molecular oxygen to 2 water molecules using 4 electrons from cytochrome c in the IMS and 4 protons from the mitochondrial matrix. The protein is Cytochrome c oxidase subunit 6B1 (COX6B1) of Bos taurus (Bovine).